The primary structure comprises 290 residues: MKVLKVGVLGPTNAGKSTLINFLHNDDSLMVSSMNNTTLLSISTEVINQANKNIVFIDVPGFTEKKHSNYELITKEIRKALSGIDVLLLVVRSDQNNKIEFLKTQLQQLKRYQNLTRIFLINKFHQKSLSEVNKAIILEEFKPQKTIEINLLKFDKNLFWSIFKQVELRYNIFRKDINFIDANNDDFKILEGLREQIIFYCKNEIPHIARIEIIEKSFNKEKNLLKIHLVISVPKLSQKKIIIGKNAEMIKAIGIATRKKLLNHFDCDIFIDIFVKTEKQKLPVYSFLSK.

One can recognise an Era-type G domain in the interval 2–144; sequence KVLKVGVLGP…AIILEEFKPQ (143 aa). Positions 10 to 17 are G1; it reads GPTNAGKS. Position 10-17 (10-17) interacts with GTP; that stretch reads GPTNAGKS. The interval 36–40 is G2; that stretch reads NTTLL. Residues 58-61 form a G3 region; sequence DVPG. A GTP-binding site is contributed by 58–62; sequence DVPGF. The segment at 97-100 is G4; it reads NKIE. The tract at residues 121–123 is G5; the sequence is INK. 122-125 contacts GTP; the sequence is NKFH. The region spanning 201-279 is the KH type-2 domain; that stretch reads CKNEIPHIAR…FIDIFVKTEK (79 aa).

This sequence belongs to the TRAFAC class TrmE-Era-EngA-EngB-Septin-like GTPase superfamily. Era GTPase family. In terms of assembly, monomer.

Its subcellular location is the cytoplasm. It localises to the cell membrane. An essential GTPase that binds both GDP and GTP, with rapid nucleotide exchange. Plays a role in 16S rRNA processing and 30S ribosomal subunit biogenesis and possibly also in cell cycle regulation and energy metabolism. The sequence is that of GTPase Era from Mycoplasma genitalium (strain ATCC 33530 / DSM 19775 / NCTC 10195 / G37) (Mycoplasmoides genitalium).